A 299-amino-acid polypeptide reads, in one-letter code: Putative cuticle collagen 155 (299 aa).

The signal sequence occupies residues 1 to 27; that stretch reads MEFEQRIKAYRFVAYSAVAFSVVAVLS. Triple-helical region regions lie at residues 103–132, 151–177, 181–202, and 216–278; these read GAAG…PGHP, GPPG…PGQD, GAPG…GAPG, and GAPG…VGEK. The interval 107–278 is disordered; that stretch reads PAGTPGKPGR…SGTPGGVGEK (172 aa). The span at 129–161 shows a compositional bias: pro residues; sequence PGHPPQQPCDPITPPPCQPCPQGPPGPPGPPGP. Gly residues predominate over residues 163 to 172; that stretch reads GDAGGNGNPG. Residues 173 to 197 show a composition bias toward low complexity; that stretch reads SPGQDGQPGAPGNKGPSGPNGNPGA. Pro residues predominate over residues 215 to 233; sequence PGAPGPQGTPGPQGPPGQP. Low complexity predominate over residues 250–268; that stretch reads PNGNPGQPGADGNPGAPGQ.

It belongs to the cuticular collagen family. As to quaternary structure, collagen polypeptide chains are complexed within the cuticle by disulfide bonds and other types of covalent cross-links.

In terms of biological role, nematode cuticles are composed largely of collagen-like proteins. The cuticle functions both as an exoskeleton and as a barrier to protect the worm from its environment. This Caenorhabditis elegans protein is Putative cuticle collagen 155 (col-155).